We begin with the raw amino-acid sequence, 247 residues long: ATP synthase subunit a, chloroplastic (247 aa).

5 helical membrane-spanning segments follow: residues 38–58, 95–115, 134–154, 199–219, and 220–240; these read QVLI…IIAV, VPFI…GALL, INTT…AGLS, LVVV…VMFL, and GLFT…AYIG.

It belongs to the ATPase A chain family. F-type ATPases have 2 components, CF(1) - the catalytic core - and CF(0) - the membrane proton channel. CF(1) has five subunits: alpha(3), beta(3), gamma(1), delta(1), epsilon(1). CF(0) has four main subunits: a, b, b' and c.

It localises to the plastid. It is found in the chloroplast thylakoid membrane. Its function is as follows. Key component of the proton channel; it plays a direct role in the translocation of protons across the membrane. In Oryza sativa subsp. indica (Rice), this protein is ATP synthase subunit a, chloroplastic.